Here is a 1352-residue protein sequence, read N- to C-terminus: Patatin-like phospholipase domain-containing protein 7 (1352 aa).

At 1–36 the chain is on the lumenal side; it reads MQNEEDACLEAGYCLGTTLSSWRLHFMEEQSQSTML. The chain crosses the membrane as a helical span at residues 37–57; the sequence is MGIGIGALLTLAFVGITFFFV. The Cytoplasmic segment spans residues 58 to 1352; sequence YRRVRRLRRA…DQGPRLEHPS (1295 aa). 170-297 contacts a nucleoside 3',5'-cyclic phosphate; the sequence is VLGHFEKPLF…VRVVQIIMVR (128 aa). A disordered region spans residues 340-364; it reads MSYGPEEQLERSLRPSEFSSSDHGS. Phosphoserine occurs at positions 341 and 379. Residues 384-411 are disordered; it reads SNHGEVDELRQSQGSGSNTSAFQESHEG. Residues 394–406 show a composition bias toward polar residues; the sequence is QSQGSGSNTSAFQ. Residues 499-585 and 613-718 each bind a nucleoside 3',5'-cyclic phosphate; these read FLHV…YEIM and ALDW…LGEK. The interval 681-967 is involved in the binding to lipid droplets; it reads VHAVRDSELA…RGCAQVGILR (287 aa). The region spanning 950 to 1116 is the PNPLA domain; it reads LVLGGGGARG…INNLPADVAR (167 aa). The GXGXXG signature appears at 954 to 959; that stretch reads GGGARG. Residues 981-985 carry the GXSXG motif; that stretch reads GTSIG. Ser-983 (nucleophile) is an active-site residue. The active-site Proton acceptor is the Asp-1103. Residues 1103–1105 carry the DGA/G motif; the sequence is DGG. Ser-1280 carries the post-translational modification Phosphoserine. Thr-1284 carries the phosphothreonine modification. The tract at residues 1295 to 1352 is disordered; that stretch reads KETYADFQSTGIELDSDSEYEPSMLQGPPSLTSPEQSQDSFPWLPNQDDQGPRLEHPS. Residues 1323–1334 are compositionally biased toward polar residues; that stretch reads PSLTSPEQSQDS.

This sequence belongs to the NTE family. In terms of tissue distribution, expressed in white and brown adipose tissue, cardiac muscle, skeletal muscle, and testis. As to expression, expressed in white adipose tissue, cardiac muscle, skeletal muscle, and testis.

It localises to the endoplasmic reticulum membrane. Its subcellular location is the lipid droplet. The catalysed reaction is a 1-acyl-sn-glycero-3-phosphocholine + H2O = sn-glycerol 3-phosphocholine + a fatty acid + H(+). It carries out the reaction 1-(9Z-octadecenoyl)-sn-glycero-3-phosphocholine + H2O = sn-glycerol 3-phosphocholine + (9Z)-octadecenoate + H(+). The enzyme catalyses 1-(9Z-octadecenoyl)-sn-glycero-3-phosphoethanolamine + H2O = sn-glycero-3-phosphoethanolamine + (9Z)-octadecenoate + H(+). It catalyses the reaction 1-(9Z-octadecenoyl)-sn-glycero-3-phospho-L-serine + H2O = sn-glycero-3-phospho-L-serine + (9Z)-octadecenoate + H(+). The catalysed reaction is 1-hexadecanoyl-sn-glycero-3-phosphocholine + H2O = sn-glycerol 3-phosphocholine + hexadecanoate + H(+). It carries out the reaction 1-hexadecanoyl-sn-glycero-3-phosphate + H2O = sn-glycerol 3-phosphate + hexadecanoate + H(+). Its activity is regulated as follows. cAMP does not regulate lysophospholipase activity in vitro. Slightly inhibited by organophosphorus (OP) compounds such as mipafox, which is likely why mice are less sensitive to distal axonophathy induced by OPs compared to humans. Lysophospholipase which preferentially deacylates unsaturated lysophosphatidylcholine (C18:1), generating glycerophosphocholine. Can also deacylate, to a lesser extent, lysophosphatidylethanolamine (C18:1), lysophosphatidyl-L-serine (C18:1) and lysophosphatidic acid (C16:0). Functionally, lysophospholipase. Its function is as follows. Lacks lysophospholipase activity. The chain is Patatin-like phospholipase domain-containing protein 7 (Pnpla7) from Mus musculus (Mouse).